Here is a 546-residue protein sequence, read N- to C-terminus: Chaperonin GroEL 6 (546 aa).

Residues 30-33, Lys51, 87-91, Gly415, and Asp496 contribute to the ATP site; these read TLGP and DGTTT.

It belongs to the chaperonin (HSP60) family. Forms a cylinder of 14 subunits composed of two heptameric rings stacked back-to-back. Interacts with the co-chaperonin GroES.

It localises to the cytoplasm. It carries out the reaction ATP + H2O + a folded polypeptide = ADP + phosphate + an unfolded polypeptide.. Together with its co-chaperonin GroES, plays an essential role in assisting protein folding. The GroEL-GroES system forms a nano-cage that allows encapsulation of the non-native substrate proteins and provides a physical environment optimized to promote and accelerate protein folding. This is Chaperonin GroEL 6 from Bradyrhizobium diazoefficiens (strain JCM 10833 / BCRC 13528 / IAM 13628 / NBRC 14792 / USDA 110).